The primary structure comprises 161 residues: Allophycocyanin beta subunit (161 aa).

Asn-71 is subject to N4-methylasparagine. (2R,3E)-phycocyanobilin is bound at residue Cys-81.

It belongs to the phycobiliprotein family. In terms of assembly, heterodimer of an alpha and a beta chain. Contains one covalently linked phycocyanobilin chromophore. The chromophore is added by the phycocyanobilin lyase CpcUS.

Its subcellular location is the cellular thylakoid membrane. Light-harvesting photosynthetic bile pigment-protein from the phycobiliprotein complex. Allophycocyanin has a maximum absorption at approximately 650 nanometers. This Picosynechococcus sp. (strain ATCC 27264 / PCC 7002 / PR-6) (Agmenellum quadruplicatum) protein is Allophycocyanin beta subunit (apcB).